The chain runs to 142 residues: Hemoglobin subunit alpha-1 (142 aa).

The region spanning 2–142 (LLSADDKKHI…VSSVLTSKYR (141 aa)) is the Globin domain. O2 is bound at residue histidine 59. Histidine 88 contributes to the heme b binding site.

This sequence belongs to the globin family. Heterotetramer of two alpha chains and two beta chains. In terms of tissue distribution, red blood cells.

Involved in oxygen transport from the lung to the various peripheral tissues. The chain is Hemoglobin subunit alpha-1 (hba1) from Xenopus borealis (Kenyan clawed frog).